Here is a 104-residue protein sequence, read N- to C-terminus: Cytochrome c-551 (104 aa).

A signal peptide spans 1–22; sequence MKPYALLSLLATGTLLAQGAWA. The heme c site is built by Cys34, Cys37, His38, and Met83.

Binds 1 heme c group covalently per subunit.

Its subcellular location is the periplasm. Functionally, electron donor for cytochrome cd1 in nitrite and nitrate respiration. This is Cytochrome c-551 (nirM) from Pseudomonas aeruginosa (strain ATCC 15692 / DSM 22644 / CIP 104116 / JCM 14847 / LMG 12228 / 1C / PRS 101 / PAO1).